A 524-amino-acid chain; its full sequence is Translation initiation factor eIF2B subunit delta (524 aa).

Residues 1–174 are disordered; it reads MAAVAVAVRE…RQQVPTRKDY (174 aa). Ala-2 is subject to N-acetylalanine. Composition is skewed to basic and acidic residues over residues 8 to 20 and 31 to 40; these read VREE…KTEL and LTQEEKLQLR. The residue at position 12 (Ser-12) is a Phosphoserine. Residues 41–51 are compositionally biased toward basic residues; that stretch reads KEKKQQKKKRK. Residue Thr-86 is modified to Phosphothreonine. 2 stretches are compositionally biased toward basic and acidic residues: residues 96–121 and 161–174; these read SKAE…RKGE and RKPD…RKDY. The may bind the chemical integrated stress response (ISR) inhibitor ISRIB stretch occupies residues 171-180; the sequence is RKDYGSKVSL.

This sequence belongs to the eIF-2B alpha/beta/delta subunits family. Component of the translation initiation factor 2B (eIF2B) complex which is a heterodecamer of two sets of five different subunits: alpha, beta, gamma, delta and epsilon. Subunits alpha, beta and delta comprise a regulatory subcomplex and subunits epsilon and gamma comprise a catalytic subcomplex. Within the complex, the hexameric regulatory complex resides at the center, with the two heterodimeric catalytic subcomplexes bound on opposite sides.

The protein resides in the cytoplasm. It is found in the cytosol. Activated by the chemical integrated stress response (ISR) inhibitor ISRIB which stimulates guanine nucleotide exchange factor activity for both phosphorylated and unphosphorylated eIF2. In terms of biological role, acts as a component of the translation initiation factor 2B (eIF2B) complex, which catalyzes the exchange of GDP for GTP on eukaryotic initiation factor 2 (eIF2) gamma subunit. Its guanine nucleotide exchange factor activity is repressed when bound to eIF2 complex phosphorylated on the alpha subunit, thereby limiting the amount of methionyl-initiator methionine tRNA available to the ribosome and consequently global translation is repressed. This chain is Translation initiation factor eIF2B subunit delta (Eif2b4), found in Rattus norvegicus (Rat).